A 177-amino-acid chain; its full sequence is Gamma-crystallin M1-2 (177 aa).

Beta/gamma crystallin 'Greek key' domains follow at residues 2-40 (GKIIFYEDRNFQGRSYECSNDNPDLQPNFNACNSVRVEN) and 41-83 (GCWM…RLLS). The connecting peptide stretch occupies residues 84–90 (QNLGIGT). Beta/gamma crystallin 'Greek key' domains lie at 91–131 (NKLR…NVLD) and 132–174 (GYWI…RRVI).

This sequence belongs to the beta/gamma-crystallin family. In terms of assembly, monomer.

In terms of biological role, crystallins are the dominant structural components of the vertebrate eye lens. This chain is Gamma-crystallin M1-2, found in Aquarana catesbeiana (American bullfrog).